A 119-amino-acid polypeptide reads, in one-letter code: Large ribosomal subunit protein bL20 (119 aa).

The protein belongs to the bacterial ribosomal protein bL20 family.

Binds directly to 23S ribosomal RNA and is necessary for the in vitro assembly process of the 50S ribosomal subunit. It is not involved in the protein synthesizing functions of that subunit. The polypeptide is Large ribosomal subunit protein bL20 (Neisseria gonorrhoeae (strain ATCC 700825 / FA 1090)).